Consider the following 141-residue polypeptide: Nucleoside diphosphate kinase 1 (141 aa).

Residues Lys11, Phe59, Arg87, Thr93, Arg104, and Asn114 each coordinate ATP. Residue His117 is the Pros-phosphohistidine intermediate of the active site.

It belongs to the NDK family. Homotetramer. Requires Mg(2+) as cofactor.

The protein resides in the cytoplasm. The enzyme catalyses a 2'-deoxyribonucleoside 5'-diphosphate + ATP = a 2'-deoxyribonucleoside 5'-triphosphate + ADP. It catalyses the reaction a ribonucleoside 5'-diphosphate + ATP = a ribonucleoside 5'-triphosphate + ADP. In terms of biological role, major role in the synthesis of nucleoside triphosphates other than ATP. The ATP gamma phosphate is transferred to the NDP beta phosphate via a ping-pong mechanism, using a phosphorylated active-site intermediate. The protein is Nucleoside diphosphate kinase 1 of Protochlamydia amoebophila (strain UWE25).